A 945-amino-acid chain; its full sequence is Valine--tRNA ligase (945 aa).

The 'HIGH' region signature appears at 42–52 (PNVTGTLHMGH). The 'KMSKS' region signature appears at 552–556 (KMSKS). ATP is bound at residue lysine 555. Residues 879 to 945 (DKAAETARLS…VQNQLAKLKD (67 aa)) adopt a coiled-coil conformation.

It belongs to the class-I aminoacyl-tRNA synthetase family. ValS type 1 subfamily. As to quaternary structure, monomer.

The protein resides in the cytoplasm. The enzyme catalyses tRNA(Val) + L-valine + ATP = L-valyl-tRNA(Val) + AMP + diphosphate. Functionally, catalyzes the attachment of valine to tRNA(Val). As ValRS can inadvertently accommodate and process structurally similar amino acids such as threonine, to avoid such errors, it has a 'posttransfer' editing activity that hydrolyzes mischarged Thr-tRNA(Val) in a tRNA-dependent manner. This chain is Valine--tRNA ligase, found in Neisseria gonorrhoeae (strain ATCC 700825 / FA 1090).